The sequence spans 490 residues: Katanin p60 ATPase-containing subunit A-like 1 (490 aa).

Met1 carries the N-acetylmethionine modification. A disordered region spans residues 96 to 182 (PAVWPPPVPA…ASDGEIPKFD (87 aa)). Over residues 116–127 (PNREVRPLRKEM) the composition is skewed to basic and acidic residues. Positions 128 to 139 (AGVGARGPVGRA) are enriched in low complexity. Residues 143–169 (SKSEKPSASRDKDCRARGRDDKGRKNM) are compositionally biased toward basic and acidic residues. Ser174 is modified (phosphoserine). 248–255 (GPPGTGKT) contacts ATP.

Belongs to the AAA ATPase family. Katanin p60 subunit A1 subfamily. A-like 1 sub-subfamily. Interacts with KATNB1 and KATNBL1.

It localises to the cytoplasm. The protein localises to the cytoskeleton. The protein resides in the spindle pole. It is found in the spindle. It carries out the reaction n ATP + n H2O + a microtubule = n ADP + n phosphate + (n+1) alpha/beta tubulin heterodimers.. Its function is as follows. Regulates microtubule dynamics in Sertoli cells, a process that is essential for spermiogenesis and male fertility. Severs microtubules in an ATP-dependent manner, promoting rapid reorganization of cellular microtubule arrays. Has microtubule-severing activity in vitro. The polypeptide is Katanin p60 ATPase-containing subunit A-like 1 (Oryctolagus cuniculus (Rabbit)).